Here is a 606-residue protein sequence, read N- to C-terminus: Gamma-aminobutyric acid receptor subunit beta (606 aa).

An N-terminal signal peptide occupies residues 1–44 (MSDSKMDKLARMAPLPRTPLLTIWLAINMALIAQETGHKRIHTV). Residues 45 to 268 (QAATGGGSML…CEIQFVRSMG (224 aa)) lie on the Extracellular side of the membrane. The N-linked (GlcNAc...) asparagine glycan is linked to N58. C185 and C199 are joined by a disulfide. The N-linked (GlcNAc...) asparagine glycan is linked to N253. The next 3 membrane-spanning stretches (helical) occupy residues 269–291 (YYLI…SFWL), 297–316 (PARV…LMSS), and 333–356 (YLGT…YMAK). The Cytoplasmic segment spans residues 357 to 568 (RIQMRKQRFM…LGITPSDIDK (212 aa)). 2 disordered regions span residues 376-451 (KQQL…VSNR) and 482-542 (HDPK…AAVP). Residues 381–395 (GANQQQANPNPNANV) show a composition bias toward low complexity. A compositionally biased stretch (gly residues) spans 396–425 (GGPGGVGVGPGGPGGPGGGVNVGVGMGMGP). Residues 430 to 443 (GHGHHAHSHGHPHA) are compositionally biased toward basic residues. Residues 499-536 (GGRGGPQSHGPGPGQGGGPPGGGGGGGGGGGPPEGGGD) show a composition bias toward gly residues. A helical transmembrane segment spans residues 569 to 590 (YSRIVFPVCFVCFNLMYWIIYL).

It belongs to the ligand-gated ion channel (TC 1.A.9) family. Gamma-aminobutyric acid receptor (TC 1.A.9.5) subfamily. In terms of assembly, forms oligomers. Interacts with Nlg4; the interaction mediates Rdl clustering. Interacts with Fbxl4; the interaction mediates Rdl degradation. As to expression, expressed in different parts of the brain: the mushroom bodies (alpha, alpha', beta, beta', gamma lobes and peduncles), the neurons projecting to the columnar-type neuron LC9 optic glomerulus, in interneurons connecting the paired olfactory lobes, antennal lobes, PDF-expressing small and large ventral lateral neurons (LNvs) of the circadian clock and lobula columnar neuron 11 (LC11) (at protein level). Expressed in all major ON pathway medulla neurons (Mi1, Tm3, Mi4, and Mi9) and in OFF pathway neurons (Tm1, Tm2, Tm4, and Tm9).

Its subcellular location is the cell membrane. The protein resides in the postsynaptic cell membrane. It localises to the cell projection. It is found in the dendrite. The protein localises to the axon. Activated by agonist muscimol. Insensitive to zinc, glycine, glutamate, and baclofen, loreclezole, to antagonist bicuculline, glycine-receptor antagonist strychnine, and nonselective GABA and glycine antagonist RU 5135. Insensitive to flunitrazepam, pentobarbitone or pregnane steroids such as 5alpha-pregnan-3alpha-ol-20-one. Inhibited by insecticides picrotoxin (PTX), cyclodiene dieldrin, TBPS and lindane. Inhibited by ivermectin, fipronil and pyrafluprole. Its activity is regulated as follows. Inhibited by insecticides picrotoxin (PTX). Gamma-aminobutyric acid (GABA) receptor voltage channel subunit. GABA, an inhibitory neurotransmitter, mediates neuronal inhibition by binding to the GABA receptor and opening an integral chloride channel. Together with glutamate receptor GluClalpha, plays an important role in the visual response by regulating the activity of ON/OFF-selective neurons. Plays a role in promoting sleep and sleep latency by regulating the activity of peptidergic PDF neurons. In large ventral lateral clock neurons, clustering is mediated by Nlg4 and protein levels undergo daily degradation in response to the circadian clock. In neurons in the mushroom bodies, has a role in odor memory acquisition where it inhibits appetitive and aversive olfactory learning, probably upstream of Adcy1/adenylate cyclase 1 and GTPase activating protein Nf1. In male-specific GABAergic neurons, plays a role in inhibiting male aggressive behavior during courtship. Its function is as follows. Gamma-aminobutyric acid (GABA) receptor voltage channel subunit. This is Gamma-aminobutyric acid receptor subunit beta (Rdl) from Drosophila melanogaster (Fruit fly).